Here is a 166-residue protein sequence, read N- to C-terminus: MGPILVLLVLLSLLEAGSANYDPCLDFDPENCTLTFAPDTSRICGVLIKCGWECRSVEITHNNKTWNNTLSTTWEPGVPQWYTVSVRGPDGSIRISNNTFIFSKMCDLAMFMSKQYSLWPPSKDNIVTFSIAYCLCACLLTALLCVCIHLLVTTRIKNANNKEKMP.

Positions 1-19 are cleaved as a signal peptide; the sequence is MGPILVLLVLLSLLEAGSA. Residues 20–131 lie on the Lumenal side of the membrane; the sequence is NYDPCLDFDP…SKDNIVTFSI (112 aa). Residue asparagine 31 is glycosylated (N-linked (GlcNAc...) asparagine; by host). Disulfide bonds link cysteine 32–cysteine 50 and cysteine 44–cysteine 106. Residues asparagine 63, asparagine 67, and asparagine 97 are each glycosylated (N-linked (GlcNAc...) asparagine; by host). A helical membrane pass occupies residues 132-152; it reads AYCLCACLLTALLCVCIHLLV. Residues 153–166 are Cytoplasmic-facing; it reads TTRIKNANNKEKMP. Positions 162–166 match the Di-lysine motif motif; it reads KEKMP.

The protein belongs to the adenoviridae E19 family. In terms of processing, both disulfide bonds are absolutely critical for the interaction with MHC antigens. Post-translationally, N-glycosylated; high-mannose.

It is found in the host endoplasmic reticulum membrane. Binds and retains class I heavy chains in the endoplasmic reticulum during the early period of virus infection, thereby impairing their transport to the cell surface. Also delays the expression of class I alleles that it cannot affect by direct retention. Binds transporters associated with antigen processing (TAP) and acts as a tapasin inhibitor, preventing class I/TAP association. In consequence, infected cells are masked for immune recognition by cytotoxic T-lymphocytes. The sequence is that of Early E3 18.5 kDa glycoprotein from Human adenovirus B serotype 11 (strain BC34) (HAdV-11).